The primary structure comprises 194 residues: uncharacterized protein (194 aa).

Residues 2–62 (QGPRERMVVS…CEAVDYAGEH (61 aa)) enclose the HTH tetR-type domain. A DNA-binding region (H-T-H motif) is located at residues 25–44 (AISDVLQHSGAPRGSAYHYF).

This is an uncharacterized protein from Mycobacterium tuberculosis (strain CDC 1551 / Oshkosh).